We begin with the raw amino-acid sequence, 389 residues long: tRNA(Met) cytidine acetate ligase (389 aa).

Residues 8 to 21 (IAEF…HEYL), Gly97, Asn153, and Arg176 contribute to the ATP site.

Belongs to the TmcAL family.

The protein localises to the cytoplasm. It catalyses the reaction cytidine(34) in elongator tRNA(Met) + acetate + ATP = N(4)-acetylcytidine(34) in elongator tRNA(Met) + AMP + diphosphate. Its function is as follows. Catalyzes the formation of N(4)-acetylcytidine (ac(4)C) at the wobble position of elongator tRNA(Met), using acetate and ATP as substrates. First activates an acetate ion to form acetyladenylate (Ac-AMP) and then transfers the acetyl group to tRNA to form ac(4)C34. The sequence is that of tRNA(Met) cytidine acetate ligase from Lactococcus lactis subsp. lactis (strain IL1403) (Streptococcus lactis).